The sequence spans 466 residues: Citrate synthase, mitochondrial (466 aa).

A mitochondrion-targeting transit peptide spans 1–27; that stretch reads MALLTAAARLLGAKNSSCLVLAARHAS. The short motif at 2-21 is the SIFI-degron element; the sequence is ALLTAAARLLGAKNSSCLVL. Lys-57 carries the post-translational modification N6-succinyllysine. Lys-76 carries the N6-acetyllysine; alternate modification. Lys-76 is subject to N6-succinyllysine; alternate. N6-succinyllysine is present on residues Lys-103 and Lys-193. At Ser-226 the chain carries Phosphoserine. His-301 is a catalytic residue. Lys-321 and Lys-327 each carry N6-acetyllysine; alternate. Residues Lys-321 and Lys-327 each carry the N6-succinyllysine; alternate modification. The active site involves His-347. Arg-356 lines the oxaloacetate pocket. Lys-375 is subject to N6-acetyllysine; alternate. N6-succinyllysine; alternate is present on Lys-375. N6-acetyllysine is present on Lys-382. Lys-393 carries the N6-acetyllysine; alternate modification. An N6-succinyllysine; alternate modification is found at Lys-393. N6,N6,N6-trimethyllysine is present on Lys-395. Asp-402 is a catalytic residue. Oxaloacetate is bound by residues Arg-428 and Arg-448. An N6-succinyllysine modification is found at Lys-450. An N6-acetyllysine; alternate modification is found at Lys-459. Position 459 is an N6-succinyllysine; alternate (Lys-459).

It belongs to the citrate synthase family. Homodimer. Methylated. Trimethylation at Lys-395 by CSKMT decreases citrate synthase activity. In terms of processing, in response to mitochondrial stress, the precursor protein is ubiquitinated by the SIFI complex in the cytoplasm before mitochondrial import, leading to its degradation. Within the SIFI complex, UBR4 initiates ubiquitin chain that are further elongated or branched by KCMF1. In terms of tissue distribution, expressed in the head region and flagellum of epididymal sperm.

The protein resides in the mitochondrion matrix. The enzyme catalyses oxaloacetate + acetyl-CoA + H2O = citrate + CoA + H(+). It participates in carbohydrate metabolism; tricarboxylic acid cycle; isocitrate from oxaloacetate: step 1/2. Its function is as follows. Key enzyme of the Krebs tricarboxylic acid cycle which catalyzes the synthesis of citrate from acetyl coenzyme A and oxaloacetate. The protein is Citrate synthase, mitochondrial (Cs) of Rattus norvegicus (Rat).